The primary structure comprises 147 residues: Hemoglobin subunit beta (147 aa).

Val2 is subject to N-acetylvaline. Positions 3–147 (HLSAEEKEAV…VANALAHKYH (145 aa)) constitute a Globin domain. A Phosphoserine modification is found at Ser45. Position 60 is an N6-acetyllysine (Lys60). Position 64 (His64) interacts with heme b. Residue Lys83 is modified to N6-acetyllysine. Residue His93 coordinates heme b. The residue at position 94 (Cys94) is an S-nitrosocysteine. Residue Lys145 is modified to N6-acetyllysine.

Belongs to the globin family. In terms of assembly, heterotetramer of two alpha chains and two beta chains. In terms of tissue distribution, red blood cells.

Involved in oxygen transport from the lung to the various peripheral tissues. The sequence is that of Hemoglobin subunit beta (HBB) from Sus scrofa (Pig).